The chain runs to 193 residues: Large ribosomal subunit protein bL25 (193 aa).

The protein belongs to the bacterial ribosomal protein bL25 family. CTC subfamily. Part of the 50S ribosomal subunit; part of the 5S rRNA/L5/L18/L25 subcomplex. Contacts the 5S rRNA. Binds to the 5S rRNA independently of L5 and L18.

Its function is as follows. This is one of the proteins that binds to the 5S RNA in the ribosome where it forms part of the central protuberance. The protein is Large ribosomal subunit protein bL25 of Oleidesulfovibrio alaskensis (strain ATCC BAA-1058 / DSM 17464 / G20) (Desulfovibrio alaskensis).